Reading from the N-terminus, the 785-residue chain is Mitochondrial intermediate peptidase (785 aa).

A mitochondrion-targeting transit peptide spans 1-43 (MLTRPAQNALLKSMQPLFRFRGCLLAKSTSTPRRDISTSSRKL). A Zn(2+)-binding site is contributed by H567. Residue E568 is part of the active site. Zn(2+) is bound by residues H571 and H574.

The protein belongs to the peptidase M3 family. Zn(2+) serves as cofactor.

It localises to the mitochondrion matrix. It catalyses the reaction Release of an N-terminal octapeptide as second stage of processing of some proteins imported into the mitochondrion.. Its function is as follows. Cleaves proteins, imported into the mitochondrion, to their mature size. While most mitochondrial precursor proteins are processed to the mature form in one step by mitochondrial processing peptidase (MPP), the sequential cleavage by MIP of an octapeptide after initial processing by MPP is a required step for a subgroup of nuclear-encoded precursor proteins destined for the matrix or the inner membrane. In Pleurotus djamor (Pink oyster mushroom), this protein is Mitochondrial intermediate peptidase (OCT1).